The sequence spans 293 residues: Nucleotide-binding protein LBA0691 (293 aa).

13–20 lines the ATP pocket; that stretch reads GMSGAGKT. 63-66 provides a ligand contact to GTP; sequence DLRV.

This sequence belongs to the RapZ-like family.

Displays ATPase and GTPase activities. This chain is Nucleotide-binding protein LBA0691, found in Lactobacillus acidophilus (strain ATCC 700396 / NCK56 / N2 / NCFM).